Consider the following 240-residue polypeptide: Uridylate kinase (240 aa).

12 to 15 (KLSG) is an ATP binding site. The segment at 20-25 (GDQGKG) is involved in allosteric activation by GTP. Position 54 (glycine 54) interacts with UMP. Residues glycine 55 and arginine 59 each coordinate ATP. Residues aspartate 74 and 135–142 (TGSPYFST) each bind UMP. ATP contacts are provided by asparagine 163, tyrosine 169, and aspartate 172.

It belongs to the UMP kinase family. As to quaternary structure, homohexamer.

It localises to the cytoplasm. The enzyme catalyses UMP + ATP = UDP + ADP. The protein operates within pyrimidine metabolism; CTP biosynthesis via de novo pathway; UDP from UMP (UMPK route): step 1/1. With respect to regulation, allosterically activated by GTP. Inhibited by UTP. Its function is as follows. Catalyzes the reversible phosphorylation of UMP to UDP. The chain is Uridylate kinase from Ligilactobacillus salivarius (strain UCC118) (Lactobacillus salivarius).